A 326-amino-acid chain; its full sequence is Glutaredoxin 3 (326 aa).

Residues 1 to 108 (MANFTDAASL…LTNKVQRLGS (108 aa)) enclose the Thioredoxin domain. Glutaredoxin domains are found at residues 125–227 (NQRL…VSLE) and 227–326 (ENRL…KGEN). [2Fe-2S] cluster contacts are provided by Cys150 and Cys252.

As to quaternary structure, homodimer; the homodimer is independent of 2Fe-2S clusters. Heterotrimer; forms a heterotrimeric complex composed by two bola2 molecules and one glrx3 molecule; linked by [2Fe-2S] clusters.

It localises to the cytoplasm. It is found in the cytosol. In terms of biological role, together with bola2, acts as a cytosolic iron-sulfur (Fe-S) cluster assembly factor that facilitates [2Fe-2S] cluster insertion into a subset of cytosolic proteins. Required for hemoglobin maturation. Does not possess any thyoredoxin activity since it lacks the conserved motif that is essential for catalytic activity. The polypeptide is Glutaredoxin 3 (glrx3) (Danio rerio (Zebrafish)).